The sequence spans 691 residues: Elongation factor G (691 aa).

Residues 8 to 282 enclose the tr-type G domain; the sequence is ERVRNIGIAA…AVVNYLPAPV (275 aa). Residues 17-24, 81-85, and 135-138 contribute to the GTP site; these read AHIDAGKT, DTPGH, and NKMD.

The protein belongs to the TRAFAC class translation factor GTPase superfamily. Classic translation factor GTPase family. EF-G/EF-2 subfamily.

The protein localises to the cytoplasm. In terms of biological role, catalyzes the GTP-dependent ribosomal translocation step during translation elongation. During this step, the ribosome changes from the pre-translocational (PRE) to the post-translocational (POST) state as the newly formed A-site-bound peptidyl-tRNA and P-site-bound deacylated tRNA move to the P and E sites, respectively. Catalyzes the coordinated movement of the two tRNA molecules, the mRNA and conformational changes in the ribosome. The protein is Elongation factor G of Prochlorococcus marinus (strain NATL1A).